The primary structure comprises 474 residues: Putative matrix metalloproteinase (474 aa).

An N-terminal signal peptide occupies residues 1-17 (MIIYFAVITCSLKLCRS). His189 provides a ligand contact to Zn(2+). Glu190 is an active-site residue. 2 residues coordinate Zn(2+): His193 and His199. One copy of the Hemopexin repeat lies at 299 to 344 (AGVYDAISYVRGDLYVFVGDLHWRFDTSGMLHNGYPQPTGATWRLP).

It belongs to the peptidase M10A family. It depends on Zn(2+) as a cofactor.

In Heliothis virescens ascovirus 3e (HvAV-3e), this protein is Putative matrix metalloproteinase.